Consider the following 79-residue polypeptide: UPF0175 protein APE_0890a.1 (79 aa).

It belongs to the UPF0175 family.

This chain is UPF0175 protein APE_0890a.1, found in Aeropyrum pernix (strain ATCC 700893 / DSM 11879 / JCM 9820 / NBRC 100138 / K1).